Here is a 125-residue protein sequence, read N- to C-terminus: Acidic phospholipase A2 5 (125 aa).

A signal peptide is located at residue S1. Residues N2 to L7 constitute a propeptide that is removed on maturation. 8 disulfides stabilise this stretch: C18-C77, C33-C124, C35-C50, C37-C54, C49-C105, C56-C98, C66-C91, and C84-C96. Residue F28 coordinates N-acetyl-beta-D-glucosamine. D30 serves as a coordination point for Zn(2+). Y34 and G36 together coordinate Ca(2+). Residues H53 and K69 each contribute to the N-acetyl-beta-D-glucosamine site. H53 is an active-site residue. E76 is a Zn(2+) binding site. The active site involves D99. Residue N117 coordinates Zn(2+).

In terms of assembly, heterodimer formed between isoform 5 and isoform 6 in presence of zinc ion and monomer in absence of zinc ion. It depends on Ca(2+) as a cofactor. Expressed by the venom gland.

The protein localises to the secreted. The enzyme catalyses a 1,2-diacyl-sn-glycero-3-phosphocholine + H2O = a 1-acyl-sn-glycero-3-phosphocholine + a fatty acid + H(+). In terms of biological role, PLA2 catalyzes the calcium-dependent hydrolysis of the 2-acyl groups in 3-sn-phosphoglycerides. This chain is Acidic phospholipase A2 5, found in Naja sagittifera (Andaman cobra).